The following is a 204-amino-acid chain: Cytochrome b6 (204 aa).

The chain crosses the membrane as a helical span at residues 23-43 (YCLGGITLTSFLVQVATGSAM). A heme c-binding site is contributed by Cys24. 2 residues coordinate heme b: His75 and His89. Transmembrane regions (helical) follow at residues 81–101 (MMVLMMILHVFRVYLTGGFKK), 107–127 (WVTGVILGVLTVSFGVTGYSL), and 136–157 (AVKIVTGVPEAIPVIGSPLVEL). Heme b contacts are provided by His176 and His191. A helical transmembrane segment spans residues 177–197 (TFILPLLTAVFMPMHFLMIRK).

It belongs to the cytochrome b family. PetB subfamily. As to quaternary structure, the 4 large subunits of the cytochrome b6-f complex are cytochrome b6, subunit IV (17 kDa polypeptide, PetD), cytochrome f and the Rieske protein, while the 4 small subunits are PetG, PetL, PetM and PetN. The complex functions as a dimer. The cofactor is heme b. Heme c serves as cofactor.

Its subcellular location is the plastid. The protein localises to the chloroplast thylakoid membrane. Functionally, component of the cytochrome b6-f complex, which mediates electron transfer between photosystem II (PSII) and photosystem I (PSI), cyclic electron flow around PSI, and state transitions. The polypeptide is Cytochrome b6 (Picea abies (Norway spruce)).